Consider the following 344-residue polypeptide: Heat-inducible transcription repressor HrcA (344 aa).

Belongs to the HrcA family.

In terms of biological role, negative regulator of class I heat shock genes (grpE-dnaK-dnaJ and groELS operons). Prevents heat-shock induction of these operons. This chain is Heat-inducible transcription repressor HrcA, found in Streptococcus equi subsp. zooepidemicus (strain MGCS10565).